The chain runs to 209 residues: Small ribosomal subunit protein uS4 (209 aa).

The disordered stretch occupies residues 22–45 (RGRNPLLRKPNPPGQHGMQRKKKS). Positions 93-154 (CRLDNIVYRL…KSRRLAIVTE (62 aa)) constitute an S4 RNA-binding domain.

This sequence belongs to the universal ribosomal protein uS4 family. In terms of assembly, part of the 30S ribosomal subunit. Contacts protein S5. The interaction surface between S4 and S5 is involved in control of translational fidelity.

Its function is as follows. One of the primary rRNA binding proteins, it binds directly to 16S rRNA where it nucleates assembly of the body of the 30S subunit. With S5 and S12 plays an important role in translational accuracy. This is Small ribosomal subunit protein uS4 from Chlamydia muridarum (strain MoPn / Nigg).